Reading from the N-terminus, the 1169-residue chain is ATP-dependent helicase/deoxyribonuclease subunit B (1169 aa).

In terms of domain architecture, UvrD-like helicase ATP-binding spans 1–296 (MTLRIVSGRS…QHVEANFANM (296 aa)). 8–15 (GRSGTGKS) contacts ATP. The region spanning 276–582 (YYTQRFQSED…EFSRIPPTLD (307 aa)) is the UvrD-like helicase C-terminal domain. [4Fe-4S] cluster contacts are provided by C804, C1129, C1132, and C1138.

This sequence belongs to the helicase family. AddB/RexB type 1 subfamily. Heterodimer of AddA and AddB. The cofactor is Mg(2+). Requires [4Fe-4S] cluster as cofactor.

Functionally, the heterodimer acts as both an ATP-dependent DNA helicase and an ATP-dependent, dual-direction single-stranded exonuclease. Recognizes the chi site generating a DNA molecule suitable for the initiation of homologous recombination. The AddB subunit has 5' -&gt; 3' nuclease activity but not helicase activity. The chain is ATP-dependent helicase/deoxyribonuclease subunit B from Lysinibacillus sphaericus (strain C3-41).